We begin with the raw amino-acid sequence, 229 residues long: Large ribosomal subunit protein uL1 (229 aa).

Belongs to the universal ribosomal protein uL1 family. In terms of assembly, part of the 50S ribosomal subunit.

Binds directly to 23S rRNA. The L1 stalk is quite mobile in the ribosome, and is involved in E site tRNA release. Its function is as follows. Protein L1 is also a translational repressor protein, it controls the translation of the L11 operon by binding to its mRNA. In Haemophilus influenzae (strain PittEE), this protein is Large ribosomal subunit protein uL1.